The following is a 273-amino-acid chain: Putative pyruvate, phosphate dikinase regulatory protein (273 aa).

149 to 156 (GPSRTSKT) serves as a coordination point for ADP.

This sequence belongs to the pyruvate, phosphate/water dikinase regulatory protein family. PDRP subfamily.

The catalysed reaction is N(tele)-phospho-L-histidyl/L-threonyl-[pyruvate, phosphate dikinase] + ADP = N(tele)-phospho-L-histidyl/O-phospho-L-threonyl-[pyruvate, phosphate dikinase] + AMP + H(+). It carries out the reaction N(tele)-phospho-L-histidyl/O-phospho-L-threonyl-[pyruvate, phosphate dikinase] + phosphate + H(+) = N(tele)-phospho-L-histidyl/L-threonyl-[pyruvate, phosphate dikinase] + diphosphate. In terms of biological role, bifunctional serine/threonine kinase and phosphorylase involved in the regulation of the pyruvate, phosphate dikinase (PPDK) by catalyzing its phosphorylation/dephosphorylation. The chain is Putative pyruvate, phosphate dikinase regulatory protein from Rickettsia bellii (strain RML369-C).